The chain runs to 64 residues: MVWLNGEPRPLEGKTLKEVLEEMGVELKGVAVLLNEEAFLGLEVPDRPLRDGDVVEVVALMQGG.

Glycine 64 bears the 1-thioglycine; alternate mark. At glycine 64 the chain carries Glycyl adenylate; alternate. A Glycyl cysteine thioester (Gly-Cys) (interchain with C-192 in TtuC); alternate cross-link involves residue glycine 64.

Belongs to the sulfur carrier protein ThiS family. C-terminal thiocarboxylation occurs in 2 steps, it is first acyl-adenylated (-COAMP) by TtuC, then thiocarboxylated (-COSH) by the cysteine desulfurases IscS or SufS.

It participates in cofactor biosynthesis; thiamine diphosphate biosynthesis. Functionally, is the sulfur donor in the synthesis of the thiazole phosphate moiety of thiamine phosphate. The chain is Sulfur carrier protein ThiS from Thermus thermophilus (strain ATCC BAA-163 / DSM 7039 / HB27).